Consider the following 335-residue polypeptide: Holliday junction branch migration complex subunit RuvB (335 aa).

A large ATPase domain (RuvB-L) region spans residues 1–183 (MDERIISSET…FGVIDHLEFY (183 aa)). Residues leucine 22, arginine 23, glycine 64, lysine 67, threonine 68, threonine 69, 130-132 (EDY), arginine 173, tyrosine 183, and arginine 220 contribute to the ATP site. Threonine 68 serves as a coordination point for Mg(2+). The tract at residues 184–254 (TEEQLTEIVL…LAKEALTLLQ (71 aa)) is small ATPAse domain (RuvB-S). The tract at residues 257–335 (PRGLDTIDQK…HLGISYEKEV (79 aa)) is head domain (RuvB-H). DNA contacts are provided by arginine 293, arginine 312, and arginine 317.

The protein belongs to the RuvB family. In terms of assembly, homohexamer. Forms an RuvA(8)-RuvB(12)-Holliday junction (HJ) complex. HJ DNA is sandwiched between 2 RuvA tetramers; dsDNA enters through RuvA and exits via RuvB. An RuvB hexamer assembles on each DNA strand where it exits the tetramer. Each RuvB hexamer is contacted by two RuvA subunits (via domain III) on 2 adjacent RuvB subunits; this complex drives branch migration. In the full resolvosome a probable DNA-RuvA(4)-RuvB(12)-RuvC(2) complex forms which resolves the HJ.

The protein resides in the cytoplasm. It catalyses the reaction ATP + H2O = ADP + phosphate + H(+). Its function is as follows. The RuvA-RuvB-RuvC complex processes Holliday junction (HJ) DNA during genetic recombination and DNA repair, while the RuvA-RuvB complex plays an important role in the rescue of blocked DNA replication forks via replication fork reversal (RFR). RuvA specifically binds to HJ cruciform DNA, conferring on it an open structure. The RuvB hexamer acts as an ATP-dependent pump, pulling dsDNA into and through the RuvAB complex. RuvB forms 2 homohexamers on either side of HJ DNA bound by 1 or 2 RuvA tetramers; 4 subunits per hexamer contact DNA at a time. Coordinated motions by a converter formed by DNA-disengaged RuvB subunits stimulates ATP hydrolysis and nucleotide exchange. Immobilization of the converter enables RuvB to convert the ATP-contained energy into a lever motion, pulling 2 nucleotides of DNA out of the RuvA tetramer per ATP hydrolyzed, thus driving DNA branch migration. The RuvB motors rotate together with the DNA substrate, which together with the progressing nucleotide cycle form the mechanistic basis for DNA recombination by continuous HJ branch migration. Branch migration allows RuvC to scan DNA until it finds its consensus sequence, where it cleaves and resolves cruciform DNA. This chain is Holliday junction branch migration complex subunit RuvB, found in Listeria welshimeri serovar 6b (strain ATCC 35897 / DSM 20650 / CCUG 15529 / CIP 8149 / NCTC 11857 / SLCC 5334 / V8).